The sequence spans 576 residues: TOX high mobility group box family member 3 (576 aa).

Disordered stretches follow at residues 189–258 (NLGG…PQKP), 422–443 (TMVG…QHQM), and 519–563 (LQHM…QIQS). A compositionally biased stretch (low complexity) spans 204 to 215 (ASKSATPSPSSS). Positions 223–239 (EANRAIGEKRAAPDSGK) are enriched in basic and acidic residues. Residues 240–250 (KPKTPKKKKKK) show a composition bias toward basic residues. The segment at residues 255 to 323 (PQKPVSAYAL…EYLKALAAYR (69 aa)) is a DNA-binding region (HMG box). Over residues 428–443 (PSTQVSPSVQTQQHQM) the composition is skewed to low complexity. The segment covering 528 to 542 (PSPRQHSPVASQITS) has biased composition (polar residues). Low complexity predominate over residues 549-563 (SPQPASQQHQSQIQS).

As to quaternary structure, homodimer. Interacts with CREB1; the interaction is not depolarization dependent. Interacts with CREBBP (via C-terminus). Interacts (via HGM box) with CITED1 (via C-terminus); the interaction increases estrogen-response element (ERE)-dependent transcription and protection against cell death. Interacts with CREB1 (phosphorylated form). In terms of tissue distribution, expressed mainly in epithelial cells. Expressed in the central nervous system (CNS), in the ileum and within the brain in the frontal and occipital lobe.

The protein resides in the nucleus. Its function is as follows. Transcriptional coactivator of the p300/CBP-mediated transcription complex. Activates transactivation through cAMP response element (CRE) sites. Protects against cell death by inducing antiapoptotic and repressing pro-apoptotic transcripts. Stimulates transcription from the estrogen-responsive or BCL-2 promoters. Required for depolarization-induced transcription activation of the C-FOS promoter in neurons. Associates with chromatin to the estrogen-responsive C3 promoter region. This chain is TOX high mobility group box family member 3 (TOX3), found in Homo sapiens (Human).